The following is a 261-amino-acid chain: uncharacterized protein (261 aa).

Polar residues predominate over residues 1-12 (MSRTSSQNQEII). Residues 1 to 139 (MSRTSSQNQE…KELDTINKKT (139 aa)) are disordered. The segment covering 23 to 55 (SSKPSKSSKPSKSSKPSKSSKTSKSSRSSGSKS) has biased composition (low complexity). Over residues 65 to 74 (SRKDKYKEEY) the composition is skewed to basic and acidic residues. A compositionally biased stretch (acidic residues) spans 79–108 (YPDEQEYEQEYEQEYEQEYQDNGEQTEEFV). The segment covering 122-139 (DERQTQSNKELDTINKKT) has biased composition (basic and acidic residues). 2 coiled-coil regions span residues 151 to 181 (MDHD…IIKL) and 218 to 243 (EDII…KKIE).

This is an uncharacterized protein from Acanthamoeba polyphaga (Amoeba).